The following is a 417-amino-acid chain: N-acetylmuramoyl-L-alanine amidase AmiC (417 aa).

The segment at residues 1-31 (MSGSNTAISRRRLLQGAGAMWLLSVSQVSLA) is a signal peptide (tat-type signal). Residues 166-185 (LEKQVPPAQSGPQPGKAGRD) form a disordered region. In terms of domain architecture, MurNAc-LAA spans 190 to 404 (IMLDPGHGGE…VAESILAGIK (215 aa)).

This sequence belongs to the N-acetylmuramoyl-L-alanine amidase 3 family. In terms of processing, predicted to be exported by the Tat system. The position of the signal peptide cleavage has not been experimentally proven.

The protein localises to the periplasm. The enzyme catalyses Hydrolyzes the link between N-acetylmuramoyl residues and L-amino acid residues in certain cell-wall glycopeptides.. Functionally, cell-wall hydrolase involved in septum cleavage during cell division. The protein is N-acetylmuramoyl-L-alanine amidase AmiC (amiC) of Escherichia coli O6:H1 (strain CFT073 / ATCC 700928 / UPEC).